The primary structure comprises 473 residues: tRNA modification GTPase MnmE (473 aa).

Residues arginine 30, glutamate 95, and arginine 134 each coordinate (6S)-5-formyl-5,6,7,8-tetrahydrofolate. Residues glycine 230–glutamate 394 form the TrmE-type G domain. Residues asparagine 240 to threonine 245, serine 259 to threonine 265, and aspartate 284 to glycine 287 contribute to the GTP site. Residues serine 244 and threonine 265 each contribute to the Mg(2+) site. Residue lysine 473 coordinates (6S)-5-formyl-5,6,7,8-tetrahydrofolate.

Belongs to the TRAFAC class TrmE-Era-EngA-EngB-Septin-like GTPase superfamily. TrmE GTPase family. As to quaternary structure, homodimer. Heterotetramer of two MnmE and two MnmG subunits. K(+) is required as a cofactor.

The protein localises to the cytoplasm. In terms of biological role, exhibits a very high intrinsic GTPase hydrolysis rate. Involved in the addition of a carboxymethylaminomethyl (cmnm) group at the wobble position (U34) of certain tRNAs, forming tRNA-cmnm(5)s(2)U34. This chain is tRNA modification GTPase MnmE, found in Chlorobium luteolum (strain DSM 273 / BCRC 81028 / 2530) (Pelodictyon luteolum).